The following is a 505-amino-acid chain: Protein dml1 (505 aa).

The segment at 330–358 (LPEDMSNHTQPVQNPEDRRTQASKGGSSK) is disordered.

Belongs to the misato family.

It localises to the mitochondrion. Functionally, involved in the partitioning of the mitochondrial organelle and mitochondrial DNA (mtDNA) inheritance. This is Protein dml1 (dml1) from Aspergillus fumigatus (strain ATCC MYA-4609 / CBS 101355 / FGSC A1100 / Af293) (Neosartorya fumigata).